Reading from the N-terminus, the 547-residue chain is Solute carrier family 22 member 7 (547 aa).

The chain crosses the membrane as a helical span at residues 21–41 (VALLALPRVLLPMHFLLPIFL). Residues 91–103 (NSTLWGEGQNSGE) show a composition bias toward polar residues. The segment at 91-112 (NSTLWGEGQNSGEQPEGEPSTV) is disordered. The next 11 membrane-spanning stretches (helical) occupy residues 145–165 (AISTFFFAGVLVGAEVYGYLS), 179–199 (VSSLALGLASAASVSYIMFAI), 203–223 (LTGMALAGFTIIVMPLELEWL), 233–253 (VLSSTFWTGGVMLLALIGYLI), 258–278 (WLLLTVTLPCVPGILTLWWVP), 345–365 (ISLCCMVVWFGVNFSYYGVSL), 367–387 (LSGLGLNVYLTQLVFGAVELP), 403–423 (LTMAGTLLGAALAVGLRILVS), 431–451 (TALAVMGKAFSEAAFTTAYLF), 465–485 (MGLTALVGRLGGSLAPLAALL), and 492–512 (LPKLAYGGIALLAACTALLLP). Residues 521–547 (ETIQDVERKSAPSSLQEEEMPMKQVQD) form a disordered region.

This sequence belongs to the major facilitator (TC 2.A.1) superfamily. Organic cation transporter (TC 2.A.1.19) family.

The protein localises to the basolateral cell membrane. The protein resides in the apical cell membrane. Its subcellular location is the cell membrane. It catalyses the reaction orotate(out) + L-glutamate(in) = orotate(in) + L-glutamate(out). The catalysed reaction is 3',5'-cyclic GMP(in) = 3',5'-cyclic GMP(out). It carries out the reaction GMP(in) = GMP(out). The enzyme catalyses 2'-deoxyguanosine(in) = 2'-deoxyguanosine(out). It catalyses the reaction GDP(in) = GDP(out). The catalysed reaction is guanosine(in) = guanosine(out). It carries out the reaction GTP(in) = GTP(out). The enzyme catalyses 3',5'-cyclic AMP(in) = 3',5'-cyclic AMP(out). It catalyses the reaction creatinine(in) = creatinine(out). The catalysed reaction is prostaglandin E2(out) = prostaglandin E2(in). It carries out the reaction 2-oxoglutarate(in) = 2-oxoglutarate(out). The enzyme catalyses glutarate(in) = glutarate(out). It catalyses the reaction urate(out) = urate(in). The catalysed reaction is estrone 3-sulfate(out) = estrone 3-sulfate(in). Functionally, functions as a Na(+)-independent bidirectional multispecific transporter. Contributes to the renal and hepatic elimination of endogenous organic compounds from the systemic circulation into the urine and bile, respectively. Capable of transporting a wide range of purine and pyrimidine nucleobases, nucleosides and nucleotides, with cGMP, 2'deoxyguanosine and GMP being the preferred substrates. Functions as a pH- and chloride-independent cGMP bidirectional facilitative transporter that can regulate both intracellular and extracellular levels of cGMP and may be involved in cGMP signaling pathways. Mediates orotate/glutamate bidirectional exchange and most likely display a physiological role in hepatic release of glutamate into the blood. Involved in renal secretion and possible reabsorption of creatinine. Able to uptake prostaglandin E2 (PGE2) and may contribute to PGE2 renal excretion. Also transports alpha-ketoglutarate and urate. Apart from the orotate/glutamate exchange, the counterions for the uptake of other SLC22A7/OAT2 substrates remain to be identified. The chain is Solute carrier family 22 member 7 (SLC22A7) from Bos taurus (Bovine).